The primary structure comprises 349 residues: Ferredoxin--NADP reductase 1 (349 aa).

Glutamate 36, lysine 44, tyrosine 48, valine 88, leucine 123, aspartate 290, and serine 331 together coordinate FAD.

The protein belongs to the ferredoxin--NADP reductase type 2 family. Homodimer. FAD serves as cofactor.

The enzyme catalyses 2 reduced [2Fe-2S]-[ferredoxin] + NADP(+) + H(+) = 2 oxidized [2Fe-2S]-[ferredoxin] + NADPH. The protein is Ferredoxin--NADP reductase 1 of Lysinibacillus sphaericus (strain C3-41).